We begin with the raw amino-acid sequence, 73 residues long: Ubiquitin-like modifier HUB1 (73 aa).

The Ubiquitin-like domain maps to 1–73 (MIEVVVNDRL…DQTNLELYYL (73 aa)).

Functionally, forms conjugate with SPH1 and HBT1. Involved in morphogenesis. This Saccharomyces cerevisiae (strain ATCC 204508 / S288c) (Baker's yeast) protein is Ubiquitin-like modifier HUB1 (HUB1).